Here is a 367-residue protein sequence, read N- to C-terminus: MEAIAKRLDACQDQLLELYEENSIDIHKHIMHWKCIRLESVLLHKAKQMGLSHIGLQVVPPLTVSETKGHNAIEMQMHLESLAKTQYGVEPWTLQDTSYEMWLTPPKRCFKKQGNTVEVKFDGCEDNVMEYVVWTHIYLQDNDSWVKVTSSVDAKGIYYTCGQFKTYYVNFNKEAQKYGSTNHWEVCYGSTVICSPASVSSTVREVSIAEPTTYTPAQTTAPTVSACTTEDGVSAPPRKRARGPSTNNTLCVANIRSVDSTINNIVTDNYNKHQRRNNCHSAATPIVQLQGDSNCLKCFRYRLNDKYKHLFELASSTWHWASPEAPHKNAIVTLTYSSEEQRQQFLNSVKIPPTIRHKVGFMSLHLL.

Residues 1-200 (MEAIAKRLDA…TVICSPASVS (200 aa)) are transactivation domain. A disordered region spans residues 225–246 (SACTTEDGVSAPPRKRARGPST). A DNA-binding domain region spans residues 283–367 (ATPIVQLQGD…KVGFMSLHLL (85 aa)).

It belongs to the papillomaviridae E2 protein family. As to quaternary structure, binds DNA as homodimer. Interacts with protein E1; this interaction greatly increases E1 DNA-binding activity. Interacts with protein L1; this interaction enhances E2-dependent replication and transcription activation. Interacts with protein L2; this interaction inhibits E2 transcriptional activity but not DNA replication function E2. Interacts with protein E7; this interaction inhibits E7 oncogenic activity. Interacts with host TAF1; this interaction modulates E2-dependent transcriptional regulation. Interacts with host BRD4; this interaction mediates E2 transcriptional activation function. Additionally, the interaction with host BRD4 on mitotic chromosomes mediates tethering of the viral genome. Interacts with host TOPBP1; this interaction is required for optimal viral DNA replication. Post-translationally, phosphorylated.

The protein localises to the host nucleus. Functionally, plays a role in the initiation of viral DNA replication. A dimer of E2 interacts with a dimer of E1 in order to improve specificity of E1 DNA binding activity. Once the complex recognizes and binds DNA at specific sites, the E2 dimer is removed from DNA. E2 also regulates viral transcription through binding to the E2RE response element (5'-ACCNNNNNNGGT-3') present in multiple copies in the regulatory regions of the viral genome. Activates or represses transcription depending on E2RE's position with regards to proximal promoter elements including the TATA-box. Repression occurs by sterically hindering the assembly of the transcription initiation complex. This chain is Regulatory protein E2, found in Human papillomavirus 11.